The sequence spans 79 residues: Sec-independent protein translocase protein TatA (79 aa).

A helical transmembrane segment spans residues 1–21 (MGGFTSIWHWVIVLLVIVLLF). The segment at 54–79 (ELKTLDAQATQTKVHETSEIKSKQES) is disordered. Basic and acidic residues predominate over residues 66–79 (KVHETSEIKSKQES).

It belongs to the TatA/E family. The Tat system comprises two distinct complexes: a TatABC complex, containing multiple copies of TatA, TatB and TatC subunits, and a separate TatA complex, containing only TatA subunits. Substrates initially bind to the TatABC complex, which probably triggers association of the separate TatA complex to form the active translocon.

Its subcellular location is the cell inner membrane. Its function is as follows. Part of the twin-arginine translocation (Tat) system that transports large folded proteins containing a characteristic twin-arginine motif in their signal peptide across membranes. TatA could form the protein-conducting channel of the Tat system. The sequence is that of Sec-independent protein translocase protein TatA from Helicobacter pylori (strain J99 / ATCC 700824) (Campylobacter pylori J99).